A 138-amino-acid chain; its full sequence is MLMPKRTKFRKQQKGQFAGLSKGATFVDFGEFGMQTLERGWITSRQIEACRVAINRYLKRKGKVWIRVFPDKSVTKKPAETRMGKGKGAPDHWVVVVRPGRILFEVANVSKEDAQDALRRAAAKLGIRTRFVKRVERV.

The protein belongs to the universal ribosomal protein uL16 family. As to quaternary structure, part of the 50S ribosomal subunit.

In terms of biological role, binds 23S rRNA and is also seen to make contacts with the A and possibly P site tRNAs. This Chlamydia trachomatis serovar D (strain ATCC VR-885 / DSM 19411 / UW-3/Cx) protein is Large ribosomal subunit protein uL16.